An 87-amino-acid polypeptide reads, in one-letter code: Putative defensin-like protein 238 (87 aa).

An N-terminal signal peptide occupies residues 1–23 (MRSITWFIVFCVFMFIALNHVKG). Intrachain disulfides connect C30/C87, C40/C65, C48/C78, and C63/C80.

It belongs to the DEFL family.

Its subcellular location is the secreted. The polypeptide is Putative defensin-like protein 238 (SCRL16) (Arabidopsis thaliana (Mouse-ear cress)).